The following is a 74-amino-acid chain: Protein SspS (74 aa).

Belongs to the alpha/beta-type SASP family.

This chain is Protein SspS (sspS), found in Streptococcus pyogenes.